Reading from the N-terminus, the 320-residue chain is Cytochrome f (320 aa).

An N-terminal signal peptide occupies residues 1 to 35 (MQTRNTFSWIREEITRSISVSLMIYIITWASISSA). The heme site is built by Y36, C56, C59, and H60. Residues 286–305 (VQGLLFFLGSVVLAQIFLVL) traverse the membrane as a helical segment.

The protein belongs to the cytochrome f family. In terms of assembly, the 4 large subunits of the cytochrome b6-f complex are cytochrome b6, subunit IV (17 kDa polypeptide, petD), cytochrome f and the Rieske protein, while the 4 small subunits are PetG, PetL, PetM and PetN. The complex functions as a dimer. It depends on heme as a cofactor. In terms of processing, purified from leaves as a water-soluble monomeric protein with a mass of 28.16 kDa, cleavage occurs after Gln-287 and separates the heme-binding from the membrane.

Its subcellular location is the plastid. The protein localises to the chloroplast thylakoid membrane. Functionally, component of the cytochrome b6-f complex, which mediates electron transfer between photosystem II (PSII) and photosystem I (PSI), cyclic electron flow around PSI, and state transitions. This Brassica rapa subsp. rapa (Turnip) protein is Cytochrome f (petA).